The following is a 413-amino-acid chain: Aspartate aminotransferase, cytoplasmic (413 aa).

The L-aspartate site is built by glycine 39, tryptophan 141, and asparagine 195. At lysine 259 the chain carries N6-(pyridoxal phosphate)lysine. Arginine 387 is an L-aspartate binding site.

It belongs to the class-I pyridoxal-phosphate-dependent aminotransferase family. Homodimer. Requires pyridoxal 5'-phosphate as cofactor.

The protein localises to the cytoplasm. The catalysed reaction is L-aspartate + 2-oxoglutarate = oxaloacetate + L-glutamate. It carries out the reaction L-cysteine + 2-oxoglutarate = 2-oxo-3-sulfanylpropanoate + L-glutamate. The enzyme catalyses (2S)-2-aminobutanoate + 2-oxoglutarate = 2-oxobutanoate + L-glutamate. It catalyses the reaction 3-sulfino-L-alanine + 2-oxoglutarate = 3-sulfinopyruvate + L-glutamate. Functionally, biosynthesis of L-glutamate from L-aspartate or L-cysteine. Important regulator of levels of glutamate, the major excitatory neurotransmitter of the vertebrate central nervous system. Acts as a scavenger of glutamate in brain neuroprotection. The aspartate aminotransferase activity is involved in hepatic glucose synthesis during development and in adipocyte glyceroneogenesis. Using L-cysteine as substrate, regulates levels of mercaptopyruvate, an important source of hydrogen sulfide. Mercaptopyruvate is converted into H(2)S via the action of 3-mercaptopyruvate sulfurtransferase (3MST). Hydrogen sulfide is an important synaptic modulator and neuroprotectant in the brain. The sequence is that of Aspartate aminotransferase, cytoplasmic from Sus scrofa (Pig).